Reading from the N-terminus, the 228-residue chain is Heptaprenylglyceryl phosphate synthase (228 aa).

K12 is a sn-glycerol 1-phosphate binding site. The Mg(2+) site is built by D14 and S40. Sn-glycerol 1-phosphate contacts are provided by residues 158–163, G188, and 208–209; these read YLEYSG and GN.

The protein belongs to the GGGP/HepGP synthase family. Group I subfamily. In terms of assembly, homodimer. The cofactor is Mg(2+).

The catalysed reaction is sn-glycerol 1-phosphate + all-trans-heptaprenyl diphosphate = 3-heptaprenyl-sn-glycero-1-phosphate + diphosphate. Its pathway is membrane lipid metabolism; glycerophospholipid metabolism. Functionally, prenyltransferase that catalyzes in vivo the transfer of the heptaprenyl moiety of heptaprenyl pyrophosphate (HepPP; 35 carbon atoms) to the C3 hydroxyl of sn-glycerol-1-phosphate (G1P), producing heptaprenylglyceryl phosphate (HepGP). This reaction is an ether-bond-formation step in the biosynthesis of archaea-type G1P-based membrane lipids found in Bacillales. To a much lesser extent, is also able to use geranyl diphosphate (GPP; C10) and geranylgeranyl diphosphate (GGPP; C20) as the prenyl donors, but not farnesyl pyrophosphate (FPP; C15). Cannot use glycerol-3-phosphate (G3P) or 3-phosphoglycerate (3PG) as an acceptor. This is Heptaprenylglyceryl phosphate synthase from Bacillus subtilis (strain 168).